Reading from the N-terminus, the 282-residue chain is 2-dehydro-3-deoxyphosphooctonate aldolase (282 aa).

The protein belongs to the KdsA family.

It localises to the cytoplasm. The enzyme catalyses D-arabinose 5-phosphate + phosphoenolpyruvate + H2O = 3-deoxy-alpha-D-manno-2-octulosonate-8-phosphate + phosphate. The protein operates within carbohydrate biosynthesis; 3-deoxy-D-manno-octulosonate biosynthesis; 3-deoxy-D-manno-octulosonate from D-ribulose 5-phosphate: step 2/3. It functions in the pathway bacterial outer membrane biogenesis; lipopolysaccharide biosynthesis. This is 2-dehydro-3-deoxyphosphooctonate aldolase from Shewanella sp. (strain MR-4).